We begin with the raw amino-acid sequence, 205 residues long: Imidazoleglycerol-phosphate dehydratase (205 aa).

This sequence belongs to the imidazoleglycerol-phosphate dehydratase family.

Its subcellular location is the cytoplasm. The catalysed reaction is D-erythro-1-(imidazol-4-yl)glycerol 3-phosphate = 3-(imidazol-4-yl)-2-oxopropyl phosphate + H2O. The protein operates within amino-acid biosynthesis; L-histidine biosynthesis; L-histidine from 5-phospho-alpha-D-ribose 1-diphosphate: step 6/9. In Chloroflexus aurantiacus (strain ATCC 29366 / DSM 635 / J-10-fl), this protein is Imidazoleglycerol-phosphate dehydratase.